The sequence spans 118 residues: Large ribosomal subunit protein bL20 (118 aa).

The protein belongs to the bacterial ribosomal protein bL20 family.

Functionally, binds directly to 23S ribosomal RNA and is necessary for the in vitro assembly process of the 50S ribosomal subunit. It is not involved in the protein synthesizing functions of that subunit. This Yersinia enterocolitica serotype O:8 / biotype 1B (strain NCTC 13174 / 8081) protein is Large ribosomal subunit protein bL20.